The sequence spans 431 residues: MKSYVEIVDVMARQILDSRANPTVEVEVVLEDGTVGRASVPSGASTGQFEAVELRDNDKAQYLGKSVLNAVDNVNETIATELIGMNVFDQTLIDQTMLEIDGTENKSKLGANAMLGVSLAVARAAAEYLGISLYQYLGGVNAKVLPVPMMNIVNGGKHADNNVDFQEFMIMPAGAPSFSEALRSCAEVYHTLKSLLQSKGLETAVGDEGGFAPNLNSNEEAIQIILEAVTKAGYEPGKDMFIAMDPASTEFYENGKYNLKGEGKVYTSEEMVEVYANLVEKYPIISLEDGMAEEDWDGWKLLTDRIGDKVQLVGDDLFVTNTKRLSKGIQLGVANSILIKLNQIGTLTETLNAIEMAQRAGYTAVVSHRSGETEDTTISDLVVAVNAGQIKTGAPARTERVAKYNQLLRIEEELGEVAEFRGLNAFYNIKK.

Gln-166 contributes to the (2R)-2-phosphoglycerate binding site. The active-site Proton donor is Glu-208. 3 residues coordinate Mg(2+): Asp-245, Glu-288, and Asp-315. Residues Lys-340, Arg-369, Ser-370, and Lys-391 each contribute to the (2R)-2-phosphoglycerate site. The active-site Proton acceptor is Lys-340.

The protein belongs to the enolase family. Requires Mg(2+) as cofactor.

The protein resides in the cytoplasm. It localises to the secreted. Its subcellular location is the cell surface. The catalysed reaction is (2R)-2-phosphoglycerate = phosphoenolpyruvate + H2O. Its pathway is carbohydrate degradation; glycolysis; pyruvate from D-glyceraldehyde 3-phosphate: step 4/5. Catalyzes the reversible conversion of 2-phosphoglycerate (2-PG) into phosphoenolpyruvate (PEP). It is essential for the degradation of carbohydrates via glycolysis. In Clostridium acetobutylicum (strain ATCC 824 / DSM 792 / JCM 1419 / IAM 19013 / LMG 5710 / NBRC 13948 / NRRL B-527 / VKM B-1787 / 2291 / W), this protein is Enolase.